Consider the following 562-residue polypeptide: Valerena-4,7(11)-diene synthase (562 aa).

Mg(2+) is bound by residues Asp314, Asp318, and Glu467. Residues 314–318 (DDTYD) carry the DDXXD motif motif.

It belongs to the terpene synthase family. The cofactor is Mg(2+). In terms of tissue distribution, predominantly expressed in root.

The enzyme catalyses (2E,6E)-farnesyl diphosphate = valerena-4,7(11)-diene + diphosphate. In terms of biological role, catalyzes formation of valerena-4,7(11)-diene, one of the active ingredients responsible for the sedative effect extracted from Valeriana officinalis root. In Valeriana officinalis (Valerian), this protein is Valerena-4,7(11)-diene synthase (TPS2).